The sequence spans 506 residues: Maturase K (506 aa).

Belongs to the intron maturase 2 family. MatK subfamily.

It is found in the plastid. The protein localises to the chloroplast. Its function is as follows. Usually encoded in the trnK tRNA gene intron. Probably assists in splicing its own and other chloroplast group II introns. This is Maturase K from Lathyrus sativus (White vetchling).